Reading from the N-terminus, the 448-residue chain is MGKYFGTDGVRGVANSELTPELAFKLGRFGGYVLAHNGTEKPTVVVGRDTRISGVMLESALVAGLLSTGAEVMRLGVITTPGVAYLTREMNAQAGVMISASHNPVQDNGIKFFGADGFKLSDAQEAEIEALLDAEEDTLPRPVGVELGHTSDYFEGGHRYLSYLKSTIEGDLEGLKIALDGAHGSTYSLAPYLFGDLEADTVTIGCNPDGNNINDGVGSTHPEKLAELVLDTDSDFGLAFDGDGDRLIAVDEQGQIVDGDQIMFILAQDMDARGELKDHMVVSTVMSNLGFYKGLESLNIKSDKTKVGDRYVVEEMRRSSYNLGGEQSGHIVMMDHNTTGDGLLTGIHLASIVKRSGKTLSELAGQMTKYPQRLVNIKVSDKHAVEQNEHVAAVIKEVEDEMNGEGRVLVRPSGTEPLVRVMVEAKTDEDAERFVNKISDVVRAHMGL.

Catalysis depends on serine 101, which acts as the Phosphoserine intermediate. Mg(2+)-binding residues include serine 101, aspartate 241, aspartate 243, and aspartate 245. Serine 101 is subject to Phosphoserine.

Belongs to the phosphohexose mutase family. It depends on Mg(2+) as a cofactor. Post-translationally, activated by phosphorylation.

The enzyme catalyses alpha-D-glucosamine 1-phosphate = D-glucosamine 6-phosphate. Its function is as follows. Catalyzes the conversion of glucosamine-6-phosphate to glucosamine-1-phosphate. The polypeptide is Phosphoglucosamine mutase (Macrococcus caseolyticus (strain JCSC5402) (Macrococcoides caseolyticum)).